The following is a 426-amino-acid chain: Putative phosphate permease TC_0064 (426 aa).

Helical transmembrane passes span 1–21 (MWWL…NIGA), 37–57 (LTLR…AVVL), 83–103 (VFGM…ASFF), 104–124 (GWPV…GIIL), 140–160 (VSWL…FSFI), 183–203 (AIII…ARVV), 207–227 (VAFR…IWGV), 260–280 (LVVE…MSFA), 309–329 (VLFI…ATWG), 365–385 (FGFP…VGLA), and 399–419 (IVLS…MFFL).

This sequence belongs to the inorganic phosphate transporter (PiT) (TC 2.A.20) family.

The protein localises to the cell membrane. Its function is as follows. Potential transporter for phosphate. In Chlamydia muridarum (strain MoPn / Nigg), this protein is Putative phosphate permease TC_0064.